We begin with the raw amino-acid sequence, 642 residues long: MISDAQKAANAAGAIATGLLSLIIPVPLTTVQWANKHYYLPKESSYTPGRWETLPFQVGIMNCMGNDLIRTVNLIKSARVGYTKMLLGVEAYFIEHKSRNSLLFQPTDSAAEDFMKSHVEPTIRDVPAMLELAPWFGRKHRDNTLTLKRFSSGVGFWCLGGAAAKNYREKSVDVVCYDELSSFEPDVEKEGSPTLLGDKRIEGSVWPKSIRGSTPKIKGSCQIEKAANESAHFMRFYVPCPHCGEEQYLKFGDDASPFGLKWEKNKPESVFYLCEHHGCVIHQSELDQSNGRWICENTGMWTRDGLMFFSARGDEIPPPRSITFHIWTAYSPFTTWVQIVYDWLDALKDPNGLKTFVNTTLGETWEEAVGEKLDHQVLMDKVVRYTAAVPARVVYLTAGIDSQRNRFEMYVWGWAPGEEAFLVDKIIIMGRPDEEETLLRVDAAINKKYRHADGTEMTISRVCWDIGGIDGEIVYQRSKKHGVFRVLPVKGASVYGKPVITMPKTRNQRGVYLCEVGTDTAKEILYARMKADPTPVDEATSYAIRFPDDPEIFSQTEAQQLVAEELVEKWEKGKMRLLWDNKKRRNEALDCLVYAYAALRVSVQRWQLDLAVLAKSREEETTRPTLKELAAKLSGGVNGYSR.

An interaction with the terminase small subunit region spans residues 1–48 (MISDAQKAANAAGAIATGLLSLIIPVPLTTVQWANKHYYLPKESSYTP). Residues 42–51 (KESSYTPGRW) carry the Q motif motif. The Walker A motif signature appears at 76–83 (KSARVGYT). The interval 166 to 353 (NYREKSVDVV…LDALKDPNGL (188 aa)) is DNA packaging/ATPase. The short motif at 174 to 179 (VVCYDE) is the Walker B motif element. E179 (for ATPase activity) is an active-site residue. D401 is a binding site for Mg(2+). Positions 401 to 587 (DSQRNRFEMY…LWDNKKRRNE (187 aa)) are endonuclease. An ATP-binding site is contributed by 491 to 498 (GASVYGKP). The tract at residues 574–585 (KMRLLWDNKKRR) is basic. Residues 589–617 (LDCLVYAYAALRVSVQRWQLDLAVLAKSR) are leucine zipper. The prohead binding stretch occupies residues 611 to 642 (AVLAKSREEETTRPTLKELAAKLSGGVNGYSR).

The protein belongs to the lambdavirus large terminase family. Heterotrimer of two small and one large terminase subunits. The catalytically competent terminase is composed of a tetramer of heterotrimers. The tetramer forms a ring structure large enough to encircle duplex DNA. Host IHFA/IHFB induces bending of viral DNA to facilitate the assembly of the terminase tetramer of heterotrimers. Interacts (via N-terminus) with the terminase small subunit (via C-terminus). Interacts (via C-terminus) with the portal protein; this interaction allows the packaging of viral DNA. Mg(2+) is required as a cofactor.

The protein localises to the host cytoplasm. The catalysed reaction is Endonucleolytic cleavage of DNA to give specific double-stranded fragments with terminal 5'-phosphates.. In terms of biological role, the terminase large subunit acts as an ATP driven molecular motor necessary for viral DNA translocation into empty capsids and as an endonuclease that cuts the viral genome from the concetamer to initiate and to end the packaging reaction. The terminase lies at a unique vertex of the procapsid and is composed of two subunits, a small terminase subunit involved in viral DNA recognition (binding to packaging sequence cos), and a large terminase subunit possessing endonucleolytic and ATPase activities (DNA maturation and packaging). The terminase binds cooperatively with the host factor IHFA/IHFB to the cos site at the junction of adjacent viral genomes. The endonuclease activity cleaves the viral DNA generating 5'overhangs of 12 bp in length. The strand separation activity separates the cohesive ends generating the single-stranded 'sticky' ends of the mature genome. IHFA/IHFB is also necessary for the strand separation activity of the terminase. The terminase remains bound to the left end of the genome to be packaged, forming a stable DNA-terminase complex. In a reaction facilitated by the viral assembly catalyst gpFI, the DNA-terminase complex binds to the portal of the procapsid thereby activating the translocase activity of the terminase. The terminase packages the viral DNA into the procapsid until the next cos site on the concatemer reaches the complex. The downstream cos site is then cut generating the mature right end of the genome, the heterotrimer undocks from the DNA-filled head and remains bound to the left end of concatemer's next genome. The polypeptide is Terminase, large subunit (2) (Escherichia coli (Bacteriophage 21)).